Consider the following 508-residue polypeptide: Mitochondrial distribution and morphology protein 10 (508 aa).

The tract at residues 160-195 (PAHPTSTRPTPPQTPPSHTRQPSEPSTPAPSPTPGN) is disordered.

The protein belongs to the MDM10 family. As to quaternary structure, component of the ER-mitochondria encounter structure (ERMES) or MDM complex, composed of MMM1, MDM10, MDM12 and MDM34. Associates with the mitochondrial outer membrane sorting assembly machinery SAM(core) complex.

It localises to the mitochondrion outer membrane. Its function is as follows. Component of the ERMES/MDM complex, which serves as a molecular tether to connect the endoplasmic reticulum and mitochondria. Components of this complex are involved in the control of mitochondrial shape and protein biogenesis and may function in phospholipid exchange. MDM10 is involved in the late assembly steps of the general translocase of the mitochondrial outer membrane (TOM complex). Functions in the TOM40-specific route of the assembly of outer membrane beta-barrel proteins, including the association of TOM40 with the receptor TOM22 and small TOM proteins. Can associate with the SAM(core) complex as well as the MDM12-MMM1 complex, both involved in late steps of the major beta-barrel assembly pathway, that is responsible for biogenesis of all outer membrane beta-barrel proteins. May act as a switch that shuttles between both complexes and channels precursor proteins into the TOM40-specific pathway. Plays a role in mitochondrial morphology and in the inheritance of mitochondria. The chain is Mitochondrial distribution and morphology protein 10 from Cryptococcus neoformans var. neoformans serotype D (strain B-3501A) (Filobasidiella neoformans).